A 246-amino-acid chain; its full sequence is Pyridoxine 5'-phosphate synthase (246 aa).

Asn-7 provides a ligand contact to 3-amino-2-oxopropyl phosphate. 9–10 provides a ligand contact to 1-deoxy-D-xylulose 5-phosphate; it reads DH. Position 18 (Arg-18) interacts with 3-amino-2-oxopropyl phosphate. The active-site Proton acceptor is the His-43. 2 residues coordinate 1-deoxy-D-xylulose 5-phosphate: Arg-45 and His-50. The Proton acceptor role is filled by Glu-70. Thr-100 is a binding site for 1-deoxy-D-xylulose 5-phosphate. Residue His-190 is the Proton donor of the active site. 3-amino-2-oxopropyl phosphate-binding positions include Gly-191 and 212–213; that span reads GH.

This sequence belongs to the PNP synthase family. Homooctamer; tetramer of dimers.

It is found in the cytoplasm. It catalyses the reaction 3-amino-2-oxopropyl phosphate + 1-deoxy-D-xylulose 5-phosphate = pyridoxine 5'-phosphate + phosphate + 2 H2O + H(+). It participates in cofactor biosynthesis; pyridoxine 5'-phosphate biosynthesis; pyridoxine 5'-phosphate from D-erythrose 4-phosphate: step 5/5. In terms of biological role, catalyzes the complicated ring closure reaction between the two acyclic compounds 1-deoxy-D-xylulose-5-phosphate (DXP) and 3-amino-2-oxopropyl phosphate (1-amino-acetone-3-phosphate or AAP) to form pyridoxine 5'-phosphate (PNP) and inorganic phosphate. This chain is Pyridoxine 5'-phosphate synthase, found in Bordetella petrii (strain ATCC BAA-461 / DSM 12804 / CCUG 43448).